The following is a 172-amino-acid chain: 3-hydroxydecanoyl-[acyl-carrier-protein] dehydratase (172 aa).

His-71 is a catalytic residue.

This sequence belongs to the thioester dehydratase family. FabA subfamily. As to quaternary structure, homodimer.

It localises to the cytoplasm. It catalyses the reaction a (3R)-hydroxyacyl-[ACP] = a (2E)-enoyl-[ACP] + H2O. The enzyme catalyses (3R)-hydroxydecanoyl-[ACP] = (2E)-decenoyl-[ACP] + H2O. The catalysed reaction is (2E)-decenoyl-[ACP] = (3Z)-decenoyl-[ACP]. It functions in the pathway lipid metabolism; fatty acid biosynthesis. Its function is as follows. Necessary for the introduction of cis unsaturation into fatty acids. Catalyzes the dehydration of (3R)-3-hydroxydecanoyl-ACP to E-(2)-decenoyl-ACP and then its isomerization to Z-(3)-decenoyl-ACP. Can catalyze the dehydratase reaction for beta-hydroxyacyl-ACPs with saturated chain lengths up to 16:0, being most active on intermediate chain length. This Escherichia coli O6:K15:H31 (strain 536 / UPEC) protein is 3-hydroxydecanoyl-[acyl-carrier-protein] dehydratase.